Here is a 107-residue protein sequence, read N- to C-terminus: UPF0145 protein ESA_02470 (107 aa).

It belongs to the UPF0145 family.

The chain is UPF0145 protein ESA_02470 from Cronobacter sakazakii (strain ATCC BAA-894) (Enterobacter sakazakii).